A 256-amino-acid polypeptide reads, in one-letter code: Imidazole glycerol phosphate synthase subunit HisF (256 aa).

Catalysis depends on residues Asp-11 and Asp-130.

Belongs to the HisA/HisF family. Heterodimer of HisH and HisF.

The protein resides in the cytoplasm. The enzyme catalyses 5-[(5-phospho-1-deoxy-D-ribulos-1-ylimino)methylamino]-1-(5-phospho-beta-D-ribosyl)imidazole-4-carboxamide + L-glutamine = D-erythro-1-(imidazol-4-yl)glycerol 3-phosphate + 5-amino-1-(5-phospho-beta-D-ribosyl)imidazole-4-carboxamide + L-glutamate + H(+). Its pathway is amino-acid biosynthesis; L-histidine biosynthesis; L-histidine from 5-phospho-alpha-D-ribose 1-diphosphate: step 5/9. IGPS catalyzes the conversion of PRFAR and glutamine to IGP, AICAR and glutamate. The HisF subunit catalyzes the cyclization activity that produces IGP and AICAR from PRFAR using the ammonia provided by the HisH subunit. This is Imidazole glycerol phosphate synthase subunit HisF from Methylocella silvestris (strain DSM 15510 / CIP 108128 / LMG 27833 / NCIMB 13906 / BL2).